The following is a 145-amino-acid chain: Ribosomal protein uL24-like (145 aa).

Disordered stretches follow at residues 1–21 (MKFN…HFNA) and 122–145 (KAKS…KMQE). Glycyl lysine isopeptide (Lys-Gly) (interchain with G-Cter in SUMO2) cross-links involve residues lysine 136 and lysine 142.

This sequence belongs to the universal ribosomal protein uL24 family.

The protein is Ribosomal protein uL24-like (RPL26L1) of Homo sapiens (Human).